A 254-amino-acid polypeptide reads, in one-letter code: Alcohol dehydrogenase (254 aa).

Residue 10–33 (FVAGLGGIGLDTSREIVKSGPKNL) participates in NAD(+) binding. A substrate-binding site is contributed by Ser-138. Catalysis depends on Tyr-151, which acts as the Proton acceptor.

The protein belongs to the short-chain dehydrogenases/reductases (SDR) family. In terms of assembly, homodimer.

It catalyses the reaction a primary alcohol + NAD(+) = an aldehyde + NADH + H(+). The enzyme catalyses a secondary alcohol + NAD(+) = a ketone + NADH + H(+). This Drosophila nigra (Fruit fly) protein is Alcohol dehydrogenase (Adh).